The sequence spans 315 residues: Indoleacetate decarboxylase activating enzyme (315 aa).

The Radical SAM core domain occupies 21 to 311 (HDGPGIRTNV…ADIIEAHGVK (291 aa)). Cys-35, Cys-39, Cys-42, Cys-61, Cys-64, Cys-67, Cys-71, Cys-98, Cys-101, Cys-106, and Cys-110 together coordinate [4Fe-4S] cluster. 4Fe-4S ferredoxin-type domains lie at 52-81 (PQLL…AITD) and 89-120 (GYVH…IAGE). S-adenosyl-L-methionine-binding positions include Gly-149, 198-200 (DCK), and His-271.

Belongs to the organic radical-activating enzymes family. The cofactor is [4Fe-4S] cluster.

The catalysed reaction is glycyl-[protein] + reduced [flavodoxin] + S-adenosyl-L-methionine = glycin-2-yl radical-[protein] + semiquinone [flavodoxin] + 5'-deoxyadenosine + L-methionine + H(+). Functionally, catalyzes activation of the indoleacetate decarboxylase OsIAD under anaerobic conditions by generation of an organic free radical on a glycine residue, via a homolytic cleavage of S-adenosyl-L-methionine (SAM). This Tractidigestivibacter scatoligenes (Olsenella scatoligenes) protein is Indoleacetate decarboxylase activating enzyme.